The following is a 158-amino-acid chain: Eukaryotic translation initiation factor 5A (158 aa).

Residue K51 is modified to Hypusine.

Belongs to the eIF-5A family. Lys-51 undergoes hypusination, a unique post-translational modification that consists in the addition of a butylamino group from spermidine to lysine side chain, leading to the formation of the unusual amino acid hypusine. eIF-5As are the only known proteins to undergo this modification, which is essential for their function.

It localises to the cytoplasm. Its function is as follows. Translation factor that promotes translation elongation and termination, particularly upon ribosome stalling at specific amino acid sequence contexts. Binds between the exit (E) and peptidyl (P) site of the ribosome and promotes rescue of stalled ribosome: specifically required for efficient translation of polyproline-containing peptides as well as other motifs that stall the ribosome. Acts as a ribosome quality control (RQC) cofactor by joining the RQC complex to facilitate peptidyl transfer during CAT tailing step. The chain is Eukaryotic translation initiation factor 5A (ANB1) from Candida albicans (strain SC5314 / ATCC MYA-2876) (Yeast).